The sequence spans 271 residues: Thioredoxin-related transmembrane protein 2 homolog (271 aa).

The N-terminal stretch at 1-28 is a signal peptide; the sequence is MTWKKQMALLAKPYYWVNILLAISYLLA. Residues 29–102 lie on the Extracellular side of the membrane; that stretch reads KKTQFICTRL…AILWAYADFR (74 aa). Residues 103-123 form a helical membrane-spanning segment; that stretch reads YGLGFLLLCVLVGMVLPEPSY. Residues 112–262 form the Thioredoxin domain; it reads VLVGMVLPEP…YKEAIERLPI (151 aa). The Cytoplasmic segment spans residues 124–271; sequence RGPEHITYFR…IAPKEAKKVQ (148 aa). The Di-lysine motif signature appears at 268 to 271; sequence KKVQ.

The protein localises to the membrane. The chain is Thioredoxin-related transmembrane protein 2 homolog from Drosophila melanogaster (Fruit fly).